The sequence spans 403 residues: MASRWRELHGSGHWDGLLDPLDVDLRRCLITYGEMIMATYEAFIGEHRSPNAGMCRYRRADLFRRVDVSHPGWYAATRYIYATANADVHGKVLLRPLCREGRATECNWMGYVAVATDEGAAALGRRDIVVAWRGTQRALEWVADLKLAPASAAGILGPEGADGTDPSVHRGYLSLYTSEDQCSELNKQSARMQVLTEIARLMDKYKDEETSITVIGHSLGATLATLNAADIAANSYNTSSLSPSGETRAPVTAVVFGSPRTGDRGFRDAFHRLRDLRMLRVRNRPDRIPHYPPVGYADVGVELLIDTRLSPFLRRHGSESQSHDLECHLHGVAGWHGDHRGFELVVDRDVALVNKFDDCLADEYPVPVRWKVHHNKSMVKGPDGRWVLQDHEPDDDDDDDDDD.

The Acyl-ester intermediate role is filled by Ser218. Catalysis depends on charge relay system residues Ser218, Asp286, and His323. Residues 381 to 403 (GPDGRWVLQDHEPDDDDDDDDDD) form a disordered region. A compositionally biased stretch (acidic residues) spans 392 to 403 (EPDDDDDDDDDD).

The protein belongs to the AB hydrolase superfamily. Lipase family.

It is found in the cytoplasm. In terms of biological role, acylhydrolase that catalyzes the hydrolysis of phospholipids at the sn-1 position. The protein is Phospholipase A1-II 2 of Oryza sativa subsp. indica (Rice).